Reading from the N-terminus, the 228-residue chain is Ribulose-phosphate 3-epimerase-like protein 1 (228 aa).

Ser10 provides a ligand contact to substrate. Residues His35, Asp37, and His70 each contribute to the a divalent metal cation site. Asp37 acts as the Proton acceptor in catalysis. Substrate contacts are provided by residues His70, 146-149 (GFGE), 175-177 (DGG), and 197-198 (GS). Position 175 (Asp175) interacts with a divalent metal cation. Catalysis depends on Asp175, which acts as the Proton donor.

It belongs to the ribulose-phosphate 3-epimerase family. Homodimer. Fe(2+) serves as cofactor. The cofactor is Mn(2+). It depends on Zn(2+) as a cofactor. Co(2+) is required as a cofactor.

The enzyme catalyses D-ribulose 5-phosphate = D-xylulose 5-phosphate. It participates in carbohydrate degradation. Functionally, catalyzes the reversible epimerization of D-ribulose 5-phosphate to D-xylulose 5-phosphate. The sequence is that of Ribulose-phosphate 3-epimerase-like protein 1 (RPEL1) from Homo sapiens (Human).